Here is an 829-residue protein sequence, read N- to C-terminus: Periplasmic nitrate reductase (829 aa).

A signal peptide (tat-type signal) is located at residues M1 to A29. A 4Fe-4S Mo/W bis-MGD-type domain is found at I41–D97. C48, C51, C55, and C83 together coordinate [4Fe-4S] cluster. Mo-bis(molybdopterin guanine dinucleotide) is bound by residues K85, Q152, N177, C181, W214–M221, S245–H249, Q264–D266, M374, Q378, N484, S510–D511, K533, D560, and T718–T727. F794 is a binding site for substrate. Mo-bis(molybdopterin guanine dinucleotide)-binding residues include N802 and K819.

The protein belongs to the prokaryotic molybdopterin-containing oxidoreductase family. NasA/NapA/NarB subfamily. Component of the periplasmic nitrate reductase NapAB complex composed of NapA and NapB. The cofactor is [4Fe-4S] cluster. Requires Mo-bis(molybdopterin guanine dinucleotide) as cofactor. In terms of processing, predicted to be exported by the Tat system. The position of the signal peptide cleavage has not been experimentally proven.

It localises to the periplasm. It catalyses the reaction 2 Fe(II)-[cytochrome] + nitrate + 2 H(+) = 2 Fe(III)-[cytochrome] + nitrite + H2O. Catalytic subunit of the periplasmic nitrate reductase complex NapAB. Receives electrons from NapB and catalyzes the reduction of nitrate to nitrite. This is Periplasmic nitrate reductase from Vibrio campbellii (strain ATCC BAA-1116).